The following is a 265-amino-acid chain: Small ribosomal subunit protein eS1 (265 aa).

Disordered stretches follow at residues 1 to 24 and 240 to 265; these read MTQGKNPGLKAGGGKKGAKKRTID and HEKKGEKATGRDGAPEEQAAQNLLAQ. Over residues 240–253 the composition is skewed to basic and acidic residues; it reads HEKKGEKATGRDGA.

The protein belongs to the eukaryotic ribosomal protein eS1 family. As to quaternary structure, component of the small ribosomal subunit. Mature ribosomes consist of a small (40S) and a large (60S) subunit. The 40S subunit contains about 33 different proteins and 1 molecule of RNA (18S). The 60S subunit contains about 49 different proteins and 3 molecules of RNA (25S, 5.8S and 5S).

The protein localises to the cytoplasm. The polypeptide is Small ribosomal subunit protein eS1 (Tetrahymena thermophila (strain SB210)).